The primary structure comprises 152 residues: MMKKIDVKILDPRVGEQFPLPTYATSGSAGLDLRACLDESVELTPGATTLLPTGLAIHIADPSLAAVILPRSGLGHKHGVVLGNLVGLIDSDYQGQLMVSVWNRGQQSFTIEPGERIAQMVFVPVVQAEFNLVEDFTATDRGEGGFGHSGRK.

Residues Arg-71–Gly-73, Asn-84, Leu-88–Asp-90, and Met-98 contribute to the substrate site.

Belongs to the dUTPase family. The cofactor is Mg(2+).

It carries out the reaction dUTP + H2O = dUMP + diphosphate + H(+). The protein operates within pyrimidine metabolism; dUMP biosynthesis; dUMP from dCTP (dUTP route): step 2/2. Its function is as follows. This enzyme is involved in nucleotide metabolism: it produces dUMP, the immediate precursor of thymidine nucleotides and it decreases the intracellular concentration of dUTP so that uracil cannot be incorporated into DNA. The protein is Deoxyuridine 5'-triphosphate nucleotidohydrolase of Cronobacter sakazakii (strain ATCC BAA-894) (Enterobacter sakazakii).